The sequence spans 59 residues: Small ribosomal subunit protein bS21 (59 aa).

Residues 32 to 42 are compositionally biased toward basic and acidic residues; sequence VRKREHYDKPS. The tract at residues 32–59 is disordered; the sequence is VRKREHYDKPSVKRKKKAEAARRKNAKK. Residues 43–59 show a composition bias toward basic residues; sequence VKRKKKAEAARRKNAKK.

The protein belongs to the bacterial ribosomal protein bS21 family.

The chain is Small ribosomal subunit protein bS21 from Clostridioides difficile (strain 630) (Peptoclostridium difficile).